The following is a 339-amino-acid chain: Dihydroorotate dehydrogenase (quinone) (339 aa).

FMN-binding positions include 64 to 68 and Thr-88; that span reads AGADK. Lys-68 provides a ligand contact to substrate. A substrate-binding site is contributed by 113-117; sequence NRNGF. Residues Asn-141 and Asn-174 each coordinate FMN. A substrate-binding site is contributed by Asn-174. The Nucleophile role is filled by Ser-177. Asn-179 serves as a coordination point for substrate. FMN contacts are provided by Lys-219 and Thr-247. A substrate-binding site is contributed by 248–249; sequence NT. FMN-binding positions include Gly-270, Gly-299, and 320 to 321; that span reads YS.

This sequence belongs to the dihydroorotate dehydrogenase family. Type 2 subfamily. Monomer. Requires FMN as cofactor.

Its subcellular location is the cell membrane. It catalyses the reaction (S)-dihydroorotate + a quinone = orotate + a quinol. Its pathway is pyrimidine metabolism; UMP biosynthesis via de novo pathway; orotate from (S)-dihydroorotate (quinone route): step 1/1. Functionally, catalyzes the conversion of dihydroorotate to orotate with quinone as electron acceptor. The sequence is that of Dihydroorotate dehydrogenase (quinone) (pyrD) from Pasteurella multocida (strain Pm70).